The following is a 123-amino-acid chain: Small ribosomal subunit protein uS12 (123 aa).

3-methylthioaspartic acid is present on aspartate 89. The interval 104–123 (TAGVKDRKQARSKYGAKRPK) is disordered. Positions 113–123 (ARSKYGAKRPK) are enriched in basic residues.

It belongs to the universal ribosomal protein uS12 family. In terms of assembly, part of the 30S ribosomal subunit. Contacts proteins S8 and S17. May interact with IF1 in the 30S initiation complex.

Functionally, with S4 and S5 plays an important role in translational accuracy. Interacts with and stabilizes bases of the 16S rRNA that are involved in tRNA selection in the A site and with the mRNA backbone. Located at the interface of the 30S and 50S subunits, it traverses the body of the 30S subunit contacting proteins on the other side and probably holding the rRNA structure together. The combined cluster of proteins S8, S12 and S17 appears to hold together the shoulder and platform of the 30S subunit. The chain is Small ribosomal subunit protein uS12 from Neisseria meningitidis serogroup C (strain 053442).